Here is a 23-residue protein sequence, read N- to C-terminus: Acidic phospholipase CHA-E6a (23 aa).

It belongs to the phospholipase A2 family. Group II subfamily. D49 sub-subfamily. The cofactor is Ca(2+). In terms of processing, contains 7 disulfide bonds. As to expression, expressed by the venom gland.

It is found in the secreted. The catalysed reaction is a 1,2-diacyl-sn-glycero-3-phosphocholine + H2O = a 1-acyl-sn-glycero-3-phosphocholine + a fatty acid + H(+). In terms of biological role, snake venom phospholipase A2 (PLA2) that shows high lipolytic (1048 umol/mg/min) and weak ADP-induced platelet aggregation activities. Also shows weak anticoagulant activity (IC(50) is less than 1.0 uM). PLA2 catalyzes the calcium-dependent hydrolysis of the 2-acyl groups in 3-sn-phosphoglycerides. The polypeptide is Acidic phospholipase CHA-E6a (Crotalus horridus (Timber rattlesnake)).